A 345-amino-acid chain; its full sequence is MTNLTLALDAMSGDFGPRVTVPAALQALASNPRLKLLLVGIPDIISPMLVNSDTELLSRLQLVPAERVVANDAKPSQAIRNSRGTSMRIALDLVKSGEAQACISAGNTGVLMGLSKLMLKSIEGIERPALMTVLPNLKQRQTVVLDLGANVNCDSRMLVQFAIMGSVMAEEVVGVVNPAVALLNIGTEESKGLDNIREAATILKRIPTINYIGYLEGDELLTGKSDVLVCDGFAGNVTLKTMEGAIRVILSLLKSSDGQKKKFSWLLRIVKKWLQKRMTKRFGHLNPDQYNGACLLGLYGIVIKSHGAANEHAFKAAIEQAVQAVERQVPDRIAARLETALPKSD.

Belongs to the PlsX family. As to quaternary structure, homodimer. Probably interacts with PlsY.

The protein resides in the cytoplasm. The enzyme catalyses a fatty acyl-[ACP] + phosphate = an acyl phosphate + holo-[ACP]. The protein operates within lipid metabolism; phospholipid metabolism. In terms of biological role, catalyzes the reversible formation of acyl-phosphate (acyl-PO(4)) from acyl-[acyl-carrier-protein] (acyl-ACP). This enzyme utilizes acyl-ACP as fatty acyl donor, but not acyl-CoA. The chain is Phosphate acyltransferase from Photorhabdus laumondii subsp. laumondii (strain DSM 15139 / CIP 105565 / TT01) (Photorhabdus luminescens subsp. laumondii).